The following is a 162-amino-acid chain: uncharacterized protein (162 aa).

The signal sequence occupies residues methionine 1–threonine 21.

This is an uncharacterized protein from Caenorhabditis elegans.